The sequence spans 525 residues: Phospho-2-dehydro-3-deoxyheptonate aldolase 1, chloroplastic (525 aa).

The span at 1–13 shows a compositional bias: polar residues; it reads MALSNASSLSTRS. Positions 1–35 are disordered; the sequence is MALSNASSLSTRSIYGGDLSHRPSNRQSSFTFHPA. Residues 1–52 constitute a chloroplast transit peptide; that stretch reads MALSNASSLSTRSIYGGDLSHRPSNRQSSFTFHPAVNTKPKSVNLVTAVHAA.

Belongs to the class-II DAHP synthase family.

It localises to the plastid. The protein resides in the chloroplast. The catalysed reaction is D-erythrose 4-phosphate + phosphoenolpyruvate + H2O = 7-phospho-2-dehydro-3-deoxy-D-arabino-heptonate + phosphate. It participates in metabolic intermediate biosynthesis; chorismate biosynthesis; chorismate from D-erythrose 4-phosphate and phosphoenolpyruvate: step 1/7. The sequence is that of Phospho-2-dehydro-3-deoxyheptonate aldolase 1, chloroplastic (DHS1) from Arabidopsis thaliana (Mouse-ear cress).